The primary structure comprises 507 residues: ATP synthase subunit alpha (507 aa).

ATP is bound at residue 168–175 (GDRQTGKT).

The protein belongs to the ATPase alpha/beta chains family. As to quaternary structure, F-type ATPases have 2 components, CF(1) - the catalytic core - and CF(0) - the membrane proton channel. CF(1) has five subunits: alpha(3), beta(3), gamma(1), delta(1), epsilon(1). CF(0) has three main subunits: a(1), b(2) and c(9-12). The alpha and beta chains form an alternating ring which encloses part of the gamma chain. CF(1) is attached to CF(0) by a central stalk formed by the gamma and epsilon chains, while a peripheral stalk is formed by the delta and b chains.

The protein resides in the cell membrane. The catalysed reaction is ATP + H2O + 4 H(+)(in) = ADP + phosphate + 5 H(+)(out). In terms of biological role, produces ATP from ADP in the presence of a proton gradient across the membrane. The alpha chain is a regulatory subunit. The polypeptide is ATP synthase subunit alpha (Mesomycoplasma hyopneumoniae (strain J / ATCC 25934 / NCTC 10110) (Mycoplasma hyopneumoniae)).